Reading from the N-terminus, the 127-residue chain is Fluoride-specific ion channel FluC (127 aa).

The next 4 helical transmembrane spans lie at Pro4–Leu24, Gly36–Ala56, Leu68–Val88, and Trp98–Ile118. Residues Gly75 and Ser78 each contribute to the Na(+) site.

The protein belongs to the fluoride channel Fluc/FEX (TC 1.A.43) family.

The protein resides in the cell inner membrane. The catalysed reaction is fluoride(in) = fluoride(out). With respect to regulation, na(+) is not transported, but it plays an essential structural role and its presence is essential for fluoride channel function. In terms of biological role, fluoride-specific ion channel. Important for reducing fluoride concentration in the cell, thus reducing its toxicity. The polypeptide is Fluoride-specific ion channel FluC (Nitrosomonas europaea (strain ATCC 19718 / CIP 103999 / KCTC 2705 / NBRC 14298)).